The primary structure comprises 489 residues: Cytochrome P450 monooxygenase orf5 (489 aa).

Residues 13 to 35 (FVRLLAFHLIGLFVSITVYRLFF) form a helical membrane-spanning segment. N-linked (GlcNAc...) asparagine glycans are attached at residues Asn-37, Asn-118, Asn-171, and Asn-345. Residue Cys-428 coordinates heme.

It belongs to the cytochrome P450 family. It depends on heme as a cofactor.

The protein resides in the membrane. Its pathway is mycotoxin biosynthesis. Cytochrome P450 monooxygenase; part of the gene cluster that mediates the biosynthesis of brefeldin A (BFA), a protein transport inhibitor that shows antiviral, antifungal, and antitumor properties. The proposed biosynthesis of BFA involves formation of an acyclic polyketide chain that is differentially tailored throughout the backbone. The highly reducing polyketide synthase Bref-PKS is proposed to synthesize the precisely reduced octaketide precursor, which could then be directly offloaded by the thiohydrolase enzyme Bref-TH followed by a cytochrome P450 monooxygenase-mediated formation of the cyclopentane ring and macrocyclization to afford 7-deoxy BFA. Alternatively, the first ring annulation can also occur on the ACP-tethered intermediate before the thiohydrolase release and lactonization. The C7-hydroxylation by another cytochrome P450 monooxygenase is believed to be the final step in the process to obtain the final structure of BFA. In addition to the HRPKS Bref-PKS and the thiohydrolase Bref-TH, the brefeldin A biosynthesis cluster contains 4 cytochrome p450 monooxygenases (called orf3 to orf6), as well a the probable cluster-specific transcription regulator orf8. This is Cytochrome P450 monooxygenase orf5 from Eupenicillium brefeldianum (Penicillium brefeldianum).